Consider the following 139-residue polypeptide: MTALVLWGLLLLLGQHTQVNSHVLGRPFSASDSSQLKSLLERLEETISEADQEQNPELDQEVEYDIRDQDPGQRWNLDLGRDQDQVTATRSEIHSRPSVQRSHLQDLLMSLRKRASSCFGARMDRIGNASGLGCNNGRG.

Residues 1–21 form the signal peptide; it reads MTALVLWGLLLLLGQHTQVNS. A propeptide spanning residues 22–114 is cleaved from the precursor; it reads HVLGRPFSAS…QDLLMSLRKR (93 aa). A disulfide bridge links Cys118 with Cys134.

Belongs to the natriuretic peptide family.

It localises to the secreted. Functionally, hormone playing a key role in cardiovascular homeostasis through regulation of natriuresis, diuresis, and vasodilation. Has a cGMP-stimulating activity. The protein is Natriuretic peptides A (nppa) of Takifugu rubripes (Japanese pufferfish).